Here is a 375-residue protein sequence, read N- to C-terminus: F-box/kelch-repeat protein At4g39240 (375 aa).

The segment covering 1–15 (MPFSAASSSSVSSIA) has biased composition (low complexity). The disordered stretch occupies residues 1–27 (MPFSAASSSSVSSIAEEPPPKKQHDPS). Residues 31 to 77 (SSYLLLLPDEIILNCLARLPKCYYPVISLVSKTFRRLIASPEIYVER) enclose the F-box domain. Kelch repeat units follow at residues 140-186 (EIYV…FFDG), 187-232 (KLYV…RSFA), and 275-321 (KIYT…GNLA).

The chain is F-box/kelch-repeat protein At4g39240 from Arabidopsis thaliana (Mouse-ear cress).